The following is a 115-amino-acid chain: Fluoride-specific ion channel FluC 4 (115 aa).

The next 2 membrane-spanning stretches (helical) occupy residues 19-39 (WGTFVVNVSGAFVIGTAAGLG) and 42-62 (LGGIFSTTIFHEFIMVGLLGG). Residues G61 and T64 each contribute to the Na(+) site. A helical transmembrane segment spans residues 89-109 (IVASALLCVLAVAAGYGGIMW).

It belongs to the fluoride channel Fluc/FEX (TC 1.A.43) family.

It localises to the cell inner membrane. The catalysed reaction is fluoride(in) = fluoride(out). Na(+) is not transported, but it plays an essential structural role and its presence is essential for fluoride channel function. In terms of biological role, fluoride-specific ion channel. Important for reducing fluoride concentration in the cell, thus reducing its toxicity. The sequence is that of Fluoride-specific ion channel FluC 4 from Brucella melitensis biotype 1 (strain ATCC 23456 / CCUG 17765 / NCTC 10094 / 16M).